The sequence spans 184 residues: uncharacterized protein (184 aa).

The first 23 residues, 1 to 23 (MFCLLHLCFYLANFASSIKRTHA), serve as a signal peptide directing secretion.

It localises to the secreted. This is an uncharacterized protein from Homo sapiens (Human).